Reading from the N-terminus, the 644-residue chain is METIKITTAQALIKFLNQQYVELDGQEYRFVQGIFTIFGHGNVLGIGQALEEDPGHLEVYQGHNEQGMAQSAIAFAKQSNRKQIYACTSSVGPGAANMVTAAATATANNIPVLLLPGDTFSTRQPDPVLQQVEQTYNLSITTNDAFKAVSKYWDRVNRPEQLMTAMINAMRVLTDPANTGAVTIALPQDVQGEIYDFPEYFFKKRVHRIERTPPSKQAIEDAVELIKRKKKPLIICGGGVRYSEAAESLKRFSEKFNIPFGETQAGKSAIEWSYGLNLGGIGVTGNSAANSIAKDADLIIGVGTRFTDFTTCSKFLFQNDDVEFLTINISSFHANKLDALKVISDAKVGLDTIANELERQGYSSDYEDEIKKAKNEWEKELNRLFNIEYTEKEFVPEIAGHCDKVVEEFYKEFDSCLTQTKVLGELNELLDDDAIVIGASGSLPGDLHKVWCPKRSNTYHMEYGYSCMGYEVSAALGVKLAEEDKEVYSLVGDGAYLMLHSELITSIKEGKKINILLFDNAGFGCINNLQMSNGMGSFATEFRHRNSETGKLDGKLLKIDFAKSAEGYGVKTYKVNTIDKLRYAIEDSKKQKISTLIDIKILPKTMTRGYESWWHVGVSEKSKNPKINKAYESKINHLAKARKY.

Residue Glu65 participates in thiamine diphosphate binding. The tract at residues 442 to 522 is thiamine pyrophosphate binding; the sequence is SLPGDLHKVW…INILLFDNAG (81 aa). Residues Asp493 and Asn520 each contribute to the Mg(2+) site.

The protein belongs to the TPP enzyme family. Mg(2+) is required as a cofactor. It depends on thiamine diphosphate as a cofactor.

The enzyme catalyses 3D-3,5/4-trihydroxycyclohexane-1,2-dione + H2O = 5-deoxy-D-glucuronate + H(+). Its pathway is polyol metabolism; myo-inositol degradation into acetyl-CoA; acetyl-CoA from myo-inositol: step 3/7. In terms of biological role, involved in the cleavage of the C1-C2 bond of 3D-(3,5/4)-trihydroxycyclohexane-1,2-dione (THcHDO) to yield 5-deoxy-glucuronate (5DG). The chain is 3D-(3,5/4)-trihydroxycyclohexane-1,2-dione hydrolase from Clostridium tetani (strain Massachusetts / E88).